Here is a 339-residue protein sequence, read N- to C-terminus: uncharacterized protein (339 aa).

Residues 17–111 (VRGEIKCLDV…WEDLSLPQNE (95 aa)) enclose the Rhodanese domain.

This is an uncharacterized protein from Schizosaccharomyces pombe (strain 972 / ATCC 24843) (Fission yeast).